The chain runs to 76 residues: U7-lycotoxin-Ls1c (76 aa).

The signal sequence occupies residues 1 to 22 (MKLIIFTGLALFLLVSLIDVEA). Residues 23–26 (QNEG) constitute a propeptide that is removed on maturation.

Belongs to the neurotoxin 19 (CSTX) family. 07 (U7-Lctx) subfamily. In terms of processing, contains 4 disulfide bonds. As to expression, expressed by the venom gland.

The protein localises to the secreted. This chain is U7-lycotoxin-Ls1c, found in Lycosa singoriensis (Wolf spider).